The following is a 220-amino-acid chain: Mediator of RNA polymerase II transcription subunit 19 (220 aa).

Positions 171–220 (AFDLDGTGKSQSGSNSGNNSKKRKNKSSGSSMATPTHSDSHEDMKRRRLE) are disordered. Residues 178–189 (GKSQSGSNSGNN) show a composition bias toward low complexity. Basic and acidic residues predominate over residues 208 to 220 (SDSHEDMKRRRLE).

The protein belongs to the Mediator complex subunit 19 family. Component of the Mediator complex, which is composed of at least 21 subunits that form three structurally distinct submodules. The Mediator head module contains MED6, MED8, MED11, SRB4/MED17, SRB5/MED18, ROX3/MED19, SRB2/MED20 and SRB6/MED22, the middle module contains MED1, MED4, NUT1/MED5, MED7, CSE2/MED9, NUT2/MED10, SRB7/MED21 and SOH1/MED31, and the tail module contains MED2, PGD1/MED3, RGR1/MED14, GAL11/MED15 and SIN4/MED16. The head and the middle modules interact directly with RNA polymerase II, whereas the elongated tail module interacts with gene-specific regulatory proteins.

It is found in the nucleus. Functionally, component of the Mediator complex, a coactivator involved in the regulated transcription of nearly all RNA polymerase II-dependent genes. Mediator functions as a bridge to convey information from gene-specific regulatory proteins to the basal RNA polymerase II transcription machinery. The Mediator complex, having a compact conformation in its free form, is recruited to promoters by direct interactions with regulatory proteins and serves for the assembly of a functional preinitiation complex with RNA polymerase II and the general transcription factors. The Mediator complex unfolds to an extended conformation and partially surrounds RNA polymerase II, specifically interacting with the unphosphorylated form of the C-terminal domain (CTD) of RNA polymerase II. The Mediator complex dissociates from the RNA polymerase II holoenzyme and stays at the promoter when transcriptional elongation begins. This Saccharomyces cerevisiae (strain ATCC 204508 / S288c) (Baker's yeast) protein is Mediator of RNA polymerase II transcription subunit 19 (ROX3).